We begin with the raw amino-acid sequence, 373 residues long: Queuine tRNA-ribosyltransferase (373 aa).

The active-site Proton acceptor is the Asp91. Residues 91-95 (DSGGF), Asp145, and Gln187 each bind substrate. An RNA binding region spans residues 245–251 (GVGTPED). Asp264 serves as the catalytic Nucleophile. Residues 269-273 (TRNAR) form an RNA binding; important for wobble base 34 recognition region. Zn(2+)-binding residues include Cys302, Cys304, Cys307, and His333.

It belongs to the queuine tRNA-ribosyltransferase family. Homodimer. Within each dimer, one monomer is responsible for RNA recognition and catalysis, while the other monomer binds to the replacement base PreQ1. Zn(2+) is required as a cofactor.

The catalysed reaction is 7-aminomethyl-7-carbaguanine + guanosine(34) in tRNA = 7-aminomethyl-7-carbaguanosine(34) in tRNA + guanine. It participates in tRNA modification; tRNA-queuosine biosynthesis. Its function is as follows. Catalyzes the base-exchange of a guanine (G) residue with the queuine precursor 7-aminomethyl-7-deazaguanine (PreQ1) at position 34 (anticodon wobble position) in tRNAs with GU(N) anticodons (tRNA-Asp, -Asn, -His and -Tyr). Catalysis occurs through a double-displacement mechanism. The nucleophile active site attacks the C1' of nucleotide 34 to detach the guanine base from the RNA, forming a covalent enzyme-RNA intermediate. The proton acceptor active site deprotonates the incoming PreQ1, allowing a nucleophilic attack on the C1' of the ribose to form the product. After dissociation, two additional enzymatic reactions on the tRNA convert PreQ1 to queuine (Q), resulting in the hypermodified nucleoside queuosine (7-(((4,5-cis-dihydroxy-2-cyclopenten-1-yl)amino)methyl)-7-deazaguanosine). In Syntrophobacter fumaroxidans (strain DSM 10017 / MPOB), this protein is Queuine tRNA-ribosyltransferase.